Consider the following 564-residue polypeptide: MFS-type transporter grgE (564 aa).

Positions 1–10 (MAENQVDPKR) are enriched in basic and acidic residues. Residues 1–52 (MAENQVDPKRNLPLYGAADESTSATDKEDEVENVRQNGSAPPIEEARESNEA) are disordered. The N-linked (GlcNAc...) asparagine glycan is linked to Asn-37. Helical transmembrane passes span 60–80 (HGLS…IISL), 101–118 (KVSW…GFQT), 131–151 (TTFL…GVAP), 161–181 (AIAG…IAFS), 192–212 (GLVG…GGAF), 220–240 (WCFY…LIFF), and 262–282 (LVGV…LQYG). Asn-289 is a glycosylation site (N-linked (GlcNAc...) asparagine). Helical transmembrane passes span 293 to 313 (VIGL…WEYY), 329 to 349 (ALWA…ILLY), 368 to 388 (VRNL…GAFV), 392 to 412 (GIAT…TGLI), 425 to 445 (IGYQ…PMNI), 462 to 482 (IFLA…SAFV), and 531 to 551 (TFAI…FTPW).

This sequence belongs to the major facilitator superfamily.

It localises to the membrane. Its function is as follows. MFS-type transporter; part of the gene cluster that mediates the biosynthesis of gregatin A, a fungal polyketide featuring an alkylated furanone core. The sequence is that of MFS-type transporter grgE from Penicillium sp.